The primary structure comprises 359 residues: Dihydroorotate dehydrogenase (quinone) (359 aa).

Residues 65 to 69 (AGLDK) and T89 each bind FMN. K69 is a substrate binding site. A substrate-binding site is contributed by 114 to 118 (NRLGF). FMN contacts are provided by N149 and N182. N182 is a binding site for substrate. Residue S185 is the Nucleophile of the active site. Substrate is bound at residue N187. 2 residues coordinate FMN: K233 and T261. 262-263 (NT) is a binding site for substrate. FMN is bound by residues G284, G313, and 334–335 (YT).

Belongs to the dihydroorotate dehydrogenase family. Type 2 subfamily. As to quaternary structure, monomer. The cofactor is FMN.

Its subcellular location is the cell membrane. It catalyses the reaction (S)-dihydroorotate + a quinone = orotate + a quinol. Its pathway is pyrimidine metabolism; UMP biosynthesis via de novo pathway; orotate from (S)-dihydroorotate (quinone route): step 1/1. In terms of biological role, catalyzes the conversion of dihydroorotate to orotate with quinone as electron acceptor. The polypeptide is Dihydroorotate dehydrogenase (quinone) (Paracidovorax citrulli (strain AAC00-1) (Acidovorax citrulli)).